Reading from the N-terminus, the 577-residue chain is Pentatricopeptide repeat-containing protein At2g01390 (577 aa).

10 PPR repeats span residues 121 to 155, 156 to 190, 191 to 225, 226 to 260, 261 to 295, 382 to 416, 417 to 451, 452 to 482, 485 to 519, and 520 to 554; these read DHFT…GVLI, DTVT…GCEP, TVVS…RVSP, NCHT…GVQP, DKAA…GVVL, DSFV…GIHL, KKSA…QHSL, GCYQ…LPDD, GVAA…EIMP, and SLGT…LVAS.

This sequence belongs to the PPR family. P subfamily.

This Arabidopsis thaliana (Mouse-ear cress) protein is Pentatricopeptide repeat-containing protein At2g01390.